Here is a 356-residue protein sequence, read N- to C-terminus: Methionine import ATP-binding protein MetN 1 (356 aa).

An ABC transporter domain is found at 2-241 (IELKNISVTF…PQQPLTKDFI (240 aa)). 38 to 45 (GYSGAGKS) contacts ATP.

It belongs to the ABC transporter superfamily. Methionine importer (TC 3.A.1.24) family. The complex is composed of two ATP-binding proteins (MetN), two transmembrane proteins (MetI) and a solute-binding protein (MetQ).

The protein localises to the cell membrane. It carries out the reaction L-methionine(out) + ATP + H2O = L-methionine(in) + ADP + phosphate + H(+). It catalyses the reaction D-methionine(out) + ATP + H2O = D-methionine(in) + ADP + phosphate + H(+). Its function is as follows. Part of the ABC transporter complex MetNIQ involved in methionine import. Responsible for energy coupling to the transport system. The polypeptide is Methionine import ATP-binding protein MetN 1 (Enterococcus faecalis (strain ATCC 700802 / V583)).